Consider the following 62-residue polypeptide: DNA-directed RNA polymerase subunit Rpo10 (62 aa).

Zn(2+) is bound by residues cysteine 6, cysteine 9, cysteine 43, and cysteine 44.

Belongs to the archaeal Rpo10/eukaryotic RPB10 RNA polymerase subunit family. Part of the RNA polymerase complex. Zn(2+) serves as cofactor.

The protein localises to the cytoplasm. It carries out the reaction RNA(n) + a ribonucleoside 5'-triphosphate = RNA(n+1) + diphosphate. Functionally, DNA-dependent RNA polymerase (RNAP) catalyzes the transcription of DNA into RNA using the four ribonucleoside triphosphates as substrates. The sequence is that of DNA-directed RNA polymerase subunit Rpo10 from Methanococcoides burtonii (strain DSM 6242 / NBRC 107633 / OCM 468 / ACE-M).